Here is a 561-residue protein sequence, read N- to C-terminus: Putative transport protein YbjL (561 aa).

Transmembrane regions (helical) follow at residues 8–28 (LLNGNYILLLFVVLALGLCLG), 32–52 (LGSIQLGNSIGVLVVSLLLGQ), 66–86 (FMLFIFCVGVEAGPNFFSIFF), 94–114 (MLALVMVGSALVIALGLGKLF), and 158–178 (NLSLGYALTYLIGLVSLIVGA). 2 consecutive RCK C-terminal domains span residues 200 to 288 (RGLD…SFRN) and 292 to 373 (VFDR…RIGF). A run of 5 helical transmembrane segments spans residues 383 to 403 (LLAFCAFFVIGLMIGMITFQF), 406 to 426 (FSFGMGNAAGLLFAGIMLGFM), 451 to 471 (VFMAGVGLSAGSGINNGLGAI), 475 to 495 (MLIAGLIVSLVPVVICFLFGA), and 540 to 560 (AIANVLLTLAGTIIVMVWPGL).

Belongs to the AAE transporter (TC 2.A.81) family. YbjL subfamily.

Its subcellular location is the cell membrane. The protein is Putative transport protein YbjL of Shigella flexneri.